The following is a 108-amino-acid chain: Translation initiation factor 1A (108 aa).

The S1-like domain maps to Pro11 to Gly85.

It belongs to the eIF-1A family.

In terms of biological role, seems to be required for maximal rate of protein biosynthesis. Enhances ribosome dissociation into subunits and stabilizes the binding of the initiator Met-tRNA(I) to 40 S ribosomal subunits. The sequence is that of Translation initiation factor 1A (eIF1A) from Saccharolobus solfataricus (strain ATCC 35092 / DSM 1617 / JCM 11322 / P2) (Sulfolobus solfataricus).